The primary structure comprises 255 residues: Flagellar brake protein YcgR (255 aa).

In terms of domain architecture, PilZ spans 122–240; the sequence is QRRTYFRINT…ERDLQQVIFE (119 aa).

The protein belongs to the YcgR family. In terms of assembly, monomer. Interacts with the flagellar basal bodies.

It localises to the bacterial flagellum basal body. In terms of biological role, acts as a flagellar brake, regulating swimming and swarming in a bis-(3'-5') cyclic diguanylic acid (c-di-GMP)-dependent manner. Binds 1 c-di-GMP dimer per subunit. Increasing levels of c-di-GMP lead to decreased motility. This chain is Flagellar brake protein YcgR, found in Pectobacterium carotovorum subsp. carotovorum (strain PC1).